The chain runs to 202 residues: Peptide deformylase 2 (202 aa).

Positions 120 and 162 each coordinate Fe cation. Residue E163 is part of the active site. H166 provides a ligand contact to Fe cation.

This sequence belongs to the polypeptide deformylase family. Requires Fe(2+) as cofactor.

It catalyses the reaction N-terminal N-formyl-L-methionyl-[peptide] + H2O = N-terminal L-methionyl-[peptide] + formate. Removes the formyl group from the N-terminal Met of newly synthesized proteins. Requires at least a dipeptide for an efficient rate of reaction. N-terminal L-methionine is a prerequisite for activity but the enzyme has broad specificity at other positions. This chain is Peptide deformylase 2, found in Rickettsia conorii (strain ATCC VR-613 / Malish 7).